We begin with the raw amino-acid sequence, 160 residues long: Lipoprotein signal peptidase (160 aa).

A run of 3 helical transmembrane segments spans residues 13–33 (IYIT…HLII), 72–92 (WFLS…ITKL), and 104–124 (SLII…GFVV). Active-site residues include D125 and D143. The chain crosses the membrane as a helical span at residues 134-154 (WHFATFNIADCSIFIGIIILM).

It belongs to the peptidase A8 family.

The protein resides in the cell inner membrane. It carries out the reaction Release of signal peptides from bacterial membrane prolipoproteins. Hydrolyzes -Xaa-Yaa-Zaa-|-(S,diacylglyceryl)Cys-, in which Xaa is hydrophobic (preferably Leu), and Yaa (Ala or Ser) and Zaa (Gly or Ala) have small, neutral side chains.. The protein operates within protein modification; lipoprotein biosynthesis (signal peptide cleavage). This protein specifically catalyzes the removal of signal peptides from prolipoproteins. This is Lipoprotein signal peptidase from Buchnera aphidicola subsp. Acyrthosiphon pisum (strain Tuc7).